We begin with the raw amino-acid sequence, 202 residues long: 3-isopropylmalate dehydratase small subunit (202 aa).

This sequence belongs to the LeuD family. LeuD type 1 subfamily. Heterodimer of LeuC and LeuD.

The enzyme catalyses (2R,3S)-3-isopropylmalate = (2S)-2-isopropylmalate. It functions in the pathway amino-acid biosynthesis; L-leucine biosynthesis; L-leucine from 3-methyl-2-oxobutanoate: step 2/4. Its function is as follows. Catalyzes the isomerization between 2-isopropylmalate and 3-isopropylmalate, via the formation of 2-isopropylmaleate. The protein is 3-isopropylmalate dehydratase small subunit of Paenarthrobacter aurescens (strain TC1).